A 243-amino-acid chain; its full sequence is MRFCLFSFALIILNCMDYSQCQGNRWRRNKRASYVSNPICKGCLSCSKDNGCSRCQQKLFFFLRREGMRQYGECLHSCPSGYYGHRAPDMNRCARCRIENCDSCFSKDFCTKCKVGFYLHRGRCFDECPDGFAPLDETMECVEGCEVGHWSEWGTCSRNNRTCGFKWGLETRTRQIVKKPAKDTIPCPTIAESRRCKMAMRHCPGGKRTPKAKEKRNKKKRRKLIERAQEQHSVFLATDRVNQ.

Residues 1–23 (MRFCLFSFALIILNCMDYSQCQG) form the signal peptide. Cystine bridges form between cysteine 40–cysteine 46, cysteine 43–cysteine 52, cysteine 55–cysteine 74, cysteine 78–cysteine 93, cysteine 96–cysteine 104, cysteine 101–cysteine 110, cysteine 113–cysteine 124, cysteine 128–cysteine 141, cysteine 145–cysteine 187, cysteine 156–cysteine 163, and cysteine 196–cysteine 203. An FU repeat occupies 90-134 (MNRCARCRIENCDSCFSKDFCTKCKVGFYLHRGRCFDECPDGFAP). Residues 144 to 204 (GCEVGHWSEW…RCKMAMRHCP (61 aa)) form the TSP type-1 domain. Asparagine 160 is a glycosylation site (N-linked (GlcNAc...) asparagine). A compositionally biased stretch (basic residues) spans 204-224 (PGGKRTPKAKEKRNKKKRRKL). The disordered stretch occupies residues 204–243 (PGGKRTPKAKEKRNKKKRRKLIERAQEQHSVFLATDRVNQ).

Belongs to the R-spondin family. As to quaternary structure, interacts with WNT1. Binds heparin. Interacts with LGR4, LGR5 and LGR6.

It localises to the secreted. In terms of biological role, activator of the canonical Wnt signaling pathway by acting as a ligand for LGR4-6 receptors. Upon binding to LGR4-6 (LGR4, LGR5 or LGR6), LGR4-6 associate with phosphorylated LRP6 and frizzled receptors that are activated by extracellular Wnt receptors, triggering the canonical Wnt signaling pathway to increase expression of target genes. Also regulates the canonical Wnt/beta-catenin-dependent pathway and non-canonical Wnt signaling by acting as an inhibitor of ZNRF3, an important regulator of the Wnt signaling pathway. Probably also acts as a ligand for frizzled and LRP receptors. During embryonic development, plays a crucial role in limb specification, amplifying the Wnt signaling pathway independently of LGR4-6 receptors, possibly by acting as a direct antagonistic ligand to RNF43 and ZNRF3, hence governing the number of limbs an embryo should form. In Mus musculus (Mouse), this protein is R-spondin-2 (Rspo2).